The following is a 217-amino-acid chain: Putative 3-methyladenine DNA glycosylase (217 aa).

The RPE2 insert domain maps to 105–145; the sequence is SHNNVYTIDTAKIKSQITDEKTQSIIIRKNRRIMKFYIPNL.

It belongs to the DNA glycosylase MPG family.

The sequence is that of Putative 3-methyladenine DNA glycosylase from Rickettsia prowazekii (strain Madrid E).